The following is a 358-amino-acid chain: Protein-glutamate methylesterase/protein-glutamine glutaminase 2 (358 aa).

Residues 7–124 form the Response regulatory domain; it reads SVLLVDDSAV…KNFLIESAAE (118 aa). D58 carries the post-translational modification 4-aspartylphosphate. The CheB-type methylesterase domain maps to 170 to 358; that stretch reads AQTTERIVAI…QEIHQAILHR (189 aa). Catalysis depends on residues S182, H208, and D304.

The protein belongs to the CheB family. In terms of processing, phosphorylated by CheA. Phosphorylation of the N-terminal regulatory domain activates the methylesterase activity.

The protein localises to the cytoplasm. It carries out the reaction [protein]-L-glutamate 5-O-methyl ester + H2O = L-glutamyl-[protein] + methanol + H(+). The catalysed reaction is L-glutaminyl-[protein] + H2O = L-glutamyl-[protein] + NH4(+). In terms of biological role, involved in chemotaxis. Part of a chemotaxis signal transduction system that modulates chemotaxis in response to various stimuli. Catalyzes the demethylation of specific methylglutamate residues introduced into the chemoreceptors (methyl-accepting chemotaxis proteins or MCP) by CheR. Also mediates the irreversible deamidation of specific glutamine residues to glutamic acid. The polypeptide is Protein-glutamate methylesterase/protein-glutamine glutaminase 2 (Pseudomonas syringae pv. tomato (strain ATCC BAA-871 / DC3000)).